The primary structure comprises 253 residues: Small ribosomal subunit protein uS3 (253 aa).

Residues Ile39–Ile109 enclose the KH type-2 domain. Residues Asp220–Ser253 are disordered. The segment covering Glu221 to Asn242 has biased composition (basic and acidic residues). Residues Arg243–Ser253 show a composition bias toward basic residues.

The protein belongs to the universal ribosomal protein uS3 family. In terms of assembly, part of the 30S ribosomal subunit. Forms a tight complex with proteins S10 and S14.

In terms of biological role, binds the lower part of the 30S subunit head. Binds mRNA in the 70S ribosome, positioning it for translation. The sequence is that of Small ribosomal subunit protein uS3 from Chlorobium chlorochromatii (strain CaD3).